Reading from the N-terminus, the 147-residue chain is Hemoglobin subunit gamma (147 aa).

One can recognise a Globin domain in the interval 3–147 (NFTAEDKAAI…VASALASRYH (145 aa)). Histidine 64 and histidine 93 together coordinate heme b.

It belongs to the globin family. In terms of assembly, heterotetramer of two alpha chains and two gamma chains in fetal hemoglobin (Hb F). As to expression, red blood cells.

Gamma chains make up the fetal hemoglobin F, in combination with alpha chains. The sequence is that of Hemoglobin subunit gamma (HBG) from Alouatta belzebul (Red-handed howler monkey).